The primary structure comprises 482 residues: Protein DETOXIFICATION 9 (482 aa).

12 helical membrane passes run Val-32–Leu-49, Ala-64–Phe-84, Phe-111–Met-131, Ile-144–Val-164, Pro-180–Val-200, Gly-209–Met-229, Ala-261–Leu-281, Ser-289–Gly-309, Ala-332–Leu-352, Ile-374–Ile-394, Ile-403–Leu-423, and Trp-435–Phe-455.

This sequence belongs to the multi antimicrobial extrusion (MATE) (TC 2.A.66.1) family.

Its subcellular location is the membrane. In Arabidopsis thaliana (Mouse-ear cress), this protein is Protein DETOXIFICATION 9.